The sequence spans 967 residues: RNA polymerase-associated protein RapA (967 aa).

One can recognise a Helicase ATP-binding domain in the interval 163–337 (EVGQRTAPRV…FARLSLLDPD (175 aa)). 176-183 (DEVGLGKT) is a binding site for ATP. The short motif at 283-286 (DEAH) is the DEAH box element. Positions 489–660 (RLEWLITFLK…KFLQNPTALE (172 aa)) constitute a Helicase C-terminal domain.

The protein belongs to the SNF2/RAD54 helicase family. RapA subfamily. Interacts with the RNAP. Has a higher affinity for the core RNAP than for the holoenzyme. Its ATPase activity is stimulated by binding to RNAP.

Transcription regulator that activates transcription by stimulating RNA polymerase (RNAP) recycling in case of stress conditions such as supercoiled DNA or high salt concentrations. Probably acts by releasing the RNAP, when it is trapped or immobilized on tightly supercoiled DNA. Does not activate transcription on linear DNA. Probably not involved in DNA repair. The sequence is that of RNA polymerase-associated protein RapA from Pasteurella multocida (strain Pm70).